A 338-amino-acid polypeptide reads, in one-letter code: Tagatose 1,6-diphosphate aldolase (338 aa).

It belongs to the aldolase LacD family.

It catalyses the reaction D-tagatofuranose 1,6-bisphosphate = D-glyceraldehyde 3-phosphate + dihydroxyacetone phosphate. It functions in the pathway carbohydrate metabolism; D-tagatose 6-phosphate degradation; D-glyceraldehyde 3-phosphate and glycerone phosphate from D-tagatose 6-phosphate: step 2/2. In Listeria monocytogenes serotype 4a (strain HCC23), this protein is Tagatose 1,6-diphosphate aldolase.